A 901-amino-acid chain; its full sequence is Envelope glycoprotein B (901 aa).

The first 34 residues, 1-34 (MRPVRGIARSRILSCSWRGTWTSALTILYLGVYC), serve as a signal peptide directing secretion. The Virion surface portion of the chain corresponds to 35–736 (ESTTVTPTTV…GALVTFVTNP (702 aa)). Residues asparagine 53, asparagine 60, and asparagine 66 are each glycosylated (N-linked (GlcNAc...) asparagine; by host). Cystine bridges form between cysteine 84/cysteine 533, cysteine 101/cysteine 489, cysteine 174/cysteine 239, and cysteine 331/cysteine 380. An involved in fusion and/or binding to host membrane region spans residues 141–147 (SYKYVTY). An N-linked (GlcNAc...) asparagine; by host glycan is attached at asparagine 197. Residues 226–233 (GSVWLYKE) form an involved in fusion and/or binding to host membrane region. N-linked (GlcNAc...) asparagine; by host glycans are attached at residues asparagine 270, asparagine 289, asparagine 328, asparagine 372, asparagine 398, asparagine 406, asparagine 436, asparagine 537, asparagine 571, and asparagine 623. Cysteine 559 and cysteine 596 are disulfide-bonded. Hydrophobic membrane proximal region stretches follow at residues 683–734 (VERV…TFVT) and 714–734 (AVGA…TFVT). A helical transmembrane segment spans residues 737–757 (FGAFVVFLFCVGCITLVITVY). At 758-901 (RRQRRAMQRP…KLNTEDDVHV (144 aa)) the chain is on the intravirion side. Disordered regions lie at residues 794 to 813 (GPEG…APYG) and 852 to 901 (DDKK…DVHV). Composition is skewed to basic and acidic residues over residues 852–864 (DDKK…KSSK) and 872–883 (SETRRRPGIMDR). An Internalization motif motif is present at residues 890–893 (YQKL).

It belongs to the herpesviridae glycoprotein B family. In terms of assembly, homotrimer; disulfide-linked. Binds to heparan sulfate proteoglycans. Interacts with gH/gL heterodimer. In terms of processing, a proteolytic cleavage by host furin generates two subunits that remain linked by disulfide bonds.

The protein localises to the virion membrane. It localises to the host cell membrane. The protein resides in the host endosome membrane. Its subcellular location is the host Golgi apparatus membrane. Functionally, envelope glycoprotein that forms spikes at the surface of virion envelope. Essential for the initial attachment to heparan sulfate moieties of the host cell surface proteoglycans. Involved in fusion of viral and cellular membranes leading to virus entry into the host cell. Following initial binding to its host receptors, membrane fusion is mediated by the fusion machinery composed at least of gB and the heterodimer gH/gL. May be involved in the fusion between the virion envelope and the outer nuclear membrane during virion egress. This chain is Envelope glycoprotein B, found in Guinea pig cytomegalovirus (strain 22122) (GPCMV).